The following is a 588-amino-acid chain: Sulfite reductase [NADPH] hemoprotein beta-component (588 aa).

Cysteine 442, cysteine 448, cysteine 487, and cysteine 491 together coordinate [4Fe-4S] cluster. A siroheme-binding site is contributed by cysteine 491.

This sequence belongs to the nitrite and sulfite reductase 4Fe-4S domain family. As to quaternary structure, alpha(8)-beta(8). The alpha component is a flavoprotein, the beta component is a hemoprotein. The cofactor is siroheme. [4Fe-4S] cluster serves as cofactor.

The enzyme catalyses hydrogen sulfide + 3 NADP(+) + 3 H2O = sulfite + 3 NADPH + 4 H(+). It functions in the pathway sulfur metabolism; hydrogen sulfide biosynthesis; hydrogen sulfide from sulfite (NADPH route): step 1/1. In terms of biological role, component of the sulfite reductase complex that catalyzes the 6-electron reduction of sulfite to sulfide. This is one of several activities required for the biosynthesis of L-cysteine from sulfate. In Actinobacillus pleuropneumoniae serotype 3 (strain JL03), this protein is Sulfite reductase [NADPH] hemoprotein beta-component.